We begin with the raw amino-acid sequence, 687 residues long: Mediator of RNA polymerase II transcription subunit 17 (687 aa).

Residues 30–43 (LSSNPNSSLHSPTS) show a composition bias toward low complexity. Disordered stretches follow at residues 30–70 (LSSN…NKTK) and 130–189 (QLGS…ETDD). Basic and acidic residues-rich tracts occupy residues 56 to 70 (TSIR…NKTK), 136 to 147 (SDGHNSEKKDTD), and 167 to 183 (KDNP…KTNE).

Belongs to the Mediator complex subunit 17 family. Component of the Mediator complex, which is composed of at least 21 subunits that form three structurally distinct submodules. The Mediator head module contains MED6, MED8, MED11, SRB4/MED17, SRB5/MED18, ROX3/MED19, SRB2/MED20 and SRB6/MED22, the middle module contains MED1, MED4, NUT1/MED5, MED7, CSE2/MED9, NUT2/MED10, SRB7/MED21 and SOH1/MED31, and the tail module contains MED2, PGD1/MED3, RGR1/MED14, GAL11/MED15 and SIN4/MED16. The head and the middle modules interact directly with RNA polymerase II, whereas the elongated tail module interacts with gene-specific regulatory proteins. The head module may also interact with the TFIIF complex. SRB4/MED17 interacts directly with MED6, MED11, ROX3/MED19, SRB2/MED20 and SRB6/MED22. Interacts directly with the activator GAL4.

The protein resides in the nucleus. Its function is as follows. Component of the Mediator complex, a coactivator involved in the regulated transcription of nearly all RNA polymerase II-dependent genes. Mediator functions as a bridge to convey information from gene-specific regulatory proteins to the basal RNA polymerase II transcription machinery. The Mediator complex, having a compact conformation in its free form, is recruited to promoters by direct interactions with regulatory proteins and serves for the assembly of a functional preinitiation complex with RNA polymerase II and the general transcription factors. The Mediator complex unfolds to an extended conformation and partially surrounds RNA polymerase II, specifically interacting with the unphosphorylated form of the C-terminal domain (CTD) of RNA polymerase II. The Mediator complex dissociates from the RNA polymerase II holoenzyme and stays at the promoter when transcriptional elongation begins. This Saccharomyces cerevisiae (strain ATCC 204508 / S288c) (Baker's yeast) protein is Mediator of RNA polymerase II transcription subunit 17 (SRB4).